The following is a 224-amino-acid chain: PKHD-type hydroxylase Sbal_3634 (224 aa).

The Fe2OG dioxygenase domain occupies 78 to 176 (QFYPPLFNRY…RTAAFMWLQS (99 aa)). 3 residues coordinate Fe cation: histidine 96, aspartate 98, and histidine 157. Arginine 167 is a binding site for 2-oxoglutarate.

Fe(2+) is required as a cofactor. L-ascorbate serves as cofactor.

In Shewanella baltica (strain OS155 / ATCC BAA-1091), this protein is PKHD-type hydroxylase Sbal_3634.